A 182-amino-acid polypeptide reads, in one-letter code: Adenine phosphoribosyltransferase (182 aa).

This sequence belongs to the purine/pyrimidine phosphoribosyltransferase family. Homodimer.

The protein localises to the cytoplasm. The catalysed reaction is AMP + diphosphate = 5-phospho-alpha-D-ribose 1-diphosphate + adenine. It participates in purine metabolism; AMP biosynthesis via salvage pathway; AMP from adenine: step 1/1. Its function is as follows. Catalyzes a salvage reaction resulting in the formation of AMP, that is energically less costly than de novo synthesis. The chain is Adenine phosphoribosyltransferase from Pseudomonas aeruginosa (strain LESB58).